The chain runs to 212 residues: Ribonuclease HII (212 aa).

The 206-residue stretch at 1–206 (MILVGIDEAG…LQDIAPNYYI (206 aa)) folds into the RNase H type-2 domain. A divalent metal cation contacts are provided by Asp-7, Glu-8, and Asp-104.

It belongs to the RNase HII family. Requires Mn(2+) as cofactor. It depends on Mg(2+) as a cofactor.

The protein resides in the cytoplasm. It carries out the reaction Endonucleolytic cleavage to 5'-phosphomonoester.. In terms of biological role, endonuclease that specifically degrades the RNA of RNA-DNA hybrids. The chain is Ribonuclease HII from Sulfolobus acidocaldarius (strain ATCC 33909 / DSM 639 / JCM 8929 / NBRC 15157 / NCIMB 11770).